Reading from the N-terminus, the 360-residue chain is UPF0324 membrane protein plu2856 (360 aa).

Helical transmembrane passes span L20 to W42, G47 to L69, V104 to L126, Q136 to A155, V167 to Y189, M239 to I256, W277 to V299, N304 to I326, and P333 to I355.

This sequence belongs to the UPF0324 family.

Its subcellular location is the cell membrane. This chain is UPF0324 membrane protein plu2856, found in Photorhabdus laumondii subsp. laumondii (strain DSM 15139 / CIP 105565 / TT01) (Photorhabdus luminescens subsp. laumondii).